Consider the following 36-residue polypeptide: U4-ctenitoxin-Pr1a (36 aa).

Cystine bridges form between C3/C17, C10/C22, and C16/C34.

In terms of tissue distribution, expressed by the venom gland.

Its subcellular location is the secreted. Functionally, neurotoxin. Causes spastic paralysis and death in mice. Moderate inhibitor of L-type calcium channels (Cav1/CACNA1). In Phoneutria reidyi (Brazilian Amazonian armed spider), this protein is U4-ctenitoxin-Pr1a.